The chain runs to 393 residues: Elongation factor Tu (393 aa).

The tr-type G domain occupies lysine 6–arginine 204. The tract at residues glycine 15–threonine 22 is G1. Glycine 15–threonine 22 is a binding site for GTP. Threonine 22 lines the Mg(2+) pocket. The G2 stretch occupies residues glycine 58–serine 62. Positions aspartate 79–glycine 82 are G3. GTP contacts are provided by residues aspartate 79 to histidine 83 and asparagine 134 to aspartate 137. The G4 stretch occupies residues asparagine 134–aspartate 137. The tract at residues serine 172–valine 174 is G5.

Belongs to the TRAFAC class translation factor GTPase superfamily. Classic translation factor GTPase family. EF-Tu/EF-1A subfamily. Monomer.

It is found in the cytoplasm. It catalyses the reaction GTP + H2O = GDP + phosphate + H(+). In terms of biological role, GTP hydrolase that promotes the GTP-dependent binding of aminoacyl-tRNA to the A-site of ribosomes during protein biosynthesis. The sequence is that of Elongation factor Tu from Anaplasma phagocytophilum (strain HZ).